The chain runs to 98 residues: Citrate lyase acyl carrier protein (98 aa).

Position 14 is an O-(phosphoribosyl dephospho-coenzyme A)serine (S14).

Belongs to the CitD family. In terms of assembly, oligomer with a subunit composition of (alpha,beta,gamma)6.

The protein localises to the cytoplasm. Its function is as follows. Covalent carrier of the coenzyme of citrate lyase. The polypeptide is Citrate lyase acyl carrier protein (Vibrio cholerae serotype O1 (strain ATCC 39541 / Classical Ogawa 395 / O395)).